A 75-amino-acid polypeptide reads, in one-letter code: Alpha-elapitoxin-Bc2b (75 aa).

The N-terminal stretch at 1–2 (YT) is a signal peptide. 5 disulfide bridges follow: Cys5–Cys24, Cys17–Cys45, Cys30–Cys34, Cys49–Cys60, and Cys61–Cys66.

Monomer in solution, homodimer in crystal state. As to expression, expressed by the venom gland.

Its subcellular location is the secreted. Its function is as follows. Binds to muscular and neuronal nicotinic acetylcholine receptor (nAChR) and inhibits acetylcholine from binding to the receptor, thereby impairing neuromuscular and neuronal transmission. Blocks muscle type nAChR. Also binds with high affinity to alpha-7/CHRNA7 nAChRs. In addition, shows a weak inhibition of neuronal alpha-3-beta-2/CHRNA3-CHRNB2 nAChR. Selectively binds to alpha-1-delta subunit interface of the mouse muscle nicotinic acetylcholine receptor, with a 10-fold higher affinity for the adult than for the fetal receptors. In vivo, when intraperitoneally injected into mice, causes flaccid paralysis and respiratory distress, followed by death within 2-4 hours. The sequence is that of Alpha-elapitoxin-Bc2b from Bungarus candidus (Malayan krait).